The sequence spans 257 residues: Neurotrophin-3 (257 aa).

An N-terminal signal peptide occupies residues 1–18 (MSILFYMIFLAYLRGIQG). Positions 19-138 (NSMDQRRLPE…VANRTARRKR (120 aa)) are excised as a propeptide. A disordered region spans residues 61–81 (STLPKAEAPREPERGEPAKSE). Positions 67-79 (EAPREPERGEPAK) are enriched in basic and acidic residues. N131 is a glycosylation site (N-linked (GlcNAc...) asparagine). 3 disulfide bridges follow: C152-C217, C195-C246, and C205-C248.

Belongs to the NGF-beta family.

It is found in the secreted. In terms of biological role, seems to promote the survival of visceral and proprioceptive sensory neurons. The protein is Neurotrophin-3 (NTF3) of Sus scrofa (Pig).